Here is a 384-residue protein sequence, read N- to C-terminus: MDIIQKSIFNSGPHSRGIYEPPLGYFTPYNTPPYIAAYSDSGSWLADHHQHHQQQHQQHQQQMQHIRFPTPPITPPRPIAGYGYRQRTQSVIMKARGQQDELCRSPVEFPDDSKSCSSSSECGTASDFVCNWTDCDRVFDTLDALAQHVTQRHAIASLTDGLYYCRWRGCQRSERGFNARYKMLVHTRTHTKEKPHRCHLCEKSFSRAENLKIHIRSHSGEKPYKCSFEGCQKAYSNSSDRFKHTRTHSMEKPYMCKVAGCQKRYTDPSSLRKHVKTFKHSIHLIASQPLTLPSVPCLLEASSESAFTCLPAASSVESTSSSSSARYYDDSNNEPSDYSLKPKQDAEFSPSYWLGDRQHSYLHSEDFFVKMDVESPLDLRIHRI.

The segment at 128–153 (FVCNWTDCDRVFDTLDALAQHVTQRH) adopts a C2H2-type 1 zinc-finger fold. A C2H2-type 2; degenerate zinc finger spans residues 163 to 190 (YYCRWRGCQRSERGFNARYKMLVHTRTH). 3 C2H2-type zinc fingers span residues 196–218 (HRCH…IRSH), 224–248 (YKCS…TRTH), and 254–280 (YMCK…TFKH). The interval 321 to 343 (SSSSARYYDDSNNEPSDYSLKPK) is disordered.

Belongs to the GLI C2H2-type zinc-finger protein family.

The protein resides in the nucleus. Functionally, transcription factor which represses a set of lipase genes involved in fat catabolism. The protein is Zinc finger protein GLIS2 homolog (sug) of Drosophila melanogaster (Fruit fly).